The sequence spans 69 residues: Chondroitin proteoglycan 9 (69 aa).

A signal peptide spans 1 to 19 (MHLWQLVLLVILFFGAAFG). Residues Ser-25 and Ser-27 are each glycosylated (O-linked (Xyl...) (chondroitin sulfate) serine).

This is Chondroitin proteoglycan 9 from Caenorhabditis elegans.